We begin with the raw amino-acid sequence, 188 residues long: Trafficking protein particle complex subunit 5 (188 aa).

Phosphoserine is present on serine 10.

The protein belongs to the TRAPP small subunits family. BET3 subfamily. As to quaternary structure, component of the multisubunit TRAPP (transport protein particle) complex, which includes at least TRAPPC2, TRAPPC2L, TRAPPC3, TRAPPC3L, TRAPPC4, TRAPPC5, TRAPPC8, TRAPPC9, TRAPPC10, TRAPPC11 and TRAPPC12.

It is found in the golgi apparatus. Its subcellular location is the cis-Golgi network. It localises to the endoplasmic reticulum. May play a role in vesicular transport from endoplasmic reticulum to Golgi. This chain is Trafficking protein particle complex subunit 5 (TRAPPC5), found in Bos taurus (Bovine).